The sequence spans 275 residues: Dermonecrotic toxin SpeSicTox-betaIIA2i (275 aa).

Residue His5 is part of the active site. Residues Glu25 and Asp27 each contribute to the Mg(2+) site. Residue His41 is the Nucleophile of the active site. Disulfide bonds link Cys45-Cys51 and Cys47-Cys190. A Mg(2+)-binding site is contributed by Asp85.

It belongs to the arthropod phospholipase D family. Class II subfamily. Mg(2+) serves as cofactor. As to expression, expressed by the venom gland.

It is found in the secreted. The enzyme catalyses an N-(acyl)-sphingosylphosphocholine = an N-(acyl)-sphingosyl-1,3-cyclic phosphate + choline. It carries out the reaction an N-(acyl)-sphingosylphosphoethanolamine = an N-(acyl)-sphingosyl-1,3-cyclic phosphate + ethanolamine. It catalyses the reaction a 1-acyl-sn-glycero-3-phosphocholine = a 1-acyl-sn-glycero-2,3-cyclic phosphate + choline. The catalysed reaction is a 1-acyl-sn-glycero-3-phosphoethanolamine = a 1-acyl-sn-glycero-2,3-cyclic phosphate + ethanolamine. In terms of biological role, dermonecrotic toxins cleave the phosphodiester linkage between the phosphate and headgroup of certain phospholipids (sphingolipid and lysolipid substrates), forming an alcohol (often choline) and a cyclic phosphate. This toxin acts on sphingomyelin (SM). It may also act on ceramide phosphoethanolamine (CPE), lysophosphatidylcholine (LPC) and lysophosphatidylethanolamine (LPE), but not on lysophosphatidylserine (LPS), and lysophosphatidylglycerol (LPG). It acts by transphosphatidylation, releasing exclusively cyclic phosphate products as second products. Induces dermonecrosis, hemolysis, increased vascular permeability, edema, inflammatory response, and platelet aggregation. This chain is Dermonecrotic toxin SpeSicTox-betaIIA2i, found in Sicarius peruensis (Six-eyed sand spider).